The primary structure comprises 286 residues: Bifunctional protein FolD (286 aa).

NADP(+)-binding positions include 168–170 (GRG), Thr-195, and Val-236.

Belongs to the tetrahydrofolate dehydrogenase/cyclohydrolase family. In terms of assembly, homodimer.

The catalysed reaction is (6R)-5,10-methylene-5,6,7,8-tetrahydrofolate + NADP(+) = (6R)-5,10-methenyltetrahydrofolate + NADPH. The enzyme catalyses (6R)-5,10-methenyltetrahydrofolate + H2O = (6R)-10-formyltetrahydrofolate + H(+). It participates in one-carbon metabolism; tetrahydrofolate interconversion. In terms of biological role, catalyzes the oxidation of 5,10-methylenetetrahydrofolate to 5,10-methenyltetrahydrofolate and then the hydrolysis of 5,10-methenyltetrahydrofolate to 10-formyltetrahydrofolate. This Mycolicibacterium gilvum (strain PYR-GCK) (Mycobacterium gilvum (strain PYR-GCK)) protein is Bifunctional protein FolD.